The primary structure comprises 88 residues: RQC P-site tRNA stabilizing factor (88 aa).

Residues 1 to 67 (MRLDKFLKVS…VEITNVKETV (67 aa)) enclose the S4 RNA-binding domain.

The protein belongs to the RqcP family. Associates with stalled 50S ribosomal subunits. Binds to RqcH, 23S rRNA and the P-site tRNA. Does not require RqcH for association with 50S subunits.

Key component of the ribosome quality control system (RQC), a ribosome-associated complex that mediates the extraction of incompletely synthesized nascent chains from stalled ribosomes and their subsequent degradation. RqcH recruits Ala-charged tRNA, and with RqcP directs the elongation of stalled nascent chains on 50S ribosomal subunits, leading to non-templated C-terminal alanine extensions (Ala tail). The Ala tail promotes nascent chain degradation. RqcP is associated with the translocation-like movement of the peptidyl-tRNA from the A-site into the P-site. This chain is RQC P-site tRNA stabilizing factor, found in Halalkalibacterium halodurans (strain ATCC BAA-125 / DSM 18197 / FERM 7344 / JCM 9153 / C-125) (Bacillus halodurans).